A 340-amino-acid polypeptide reads, in one-letter code: Cell growth-regulated gene 1 protein (340 aa).

It belongs to the SMP-30/CGR1 family.

In terms of biological role, involved in the cell growth regulation. This is Cell growth-regulated gene 1 protein (CGR1) from Candida albicans (strain SC5314 / ATCC MYA-2876) (Yeast).